The primary structure comprises 172 residues: Translationally-controlled tumor protein (172 aa).

One can recognise a TCTP domain in the interval 1–172; sequence MIIYRDLISH…FKDGLEMEKC (172 aa). Phosphoserine is present on residues Ser-46 and Ser-53. Ser-64 carries the post-translational modification Phosphoserine; by PLK1. A required for reduction of TSC22D1 protein stability region spans residues 70–172; it reads VDIVMNHHLQ…FKDGLEMEKC (103 aa).

It belongs to the TCTP family. As to quaternary structure, homodimer. Interacts with STEAP3. Interacts with TSC22D1; interaction results in the destabilization of TSC22D1 protein.

The protein localises to the cytoplasm. Functionally, involved in calcium binding and microtubule stabilization. Acts as a negative regulator of TSC22D1-mediated apoptosis, via interaction with and destabilization of TSC22D1 protein. In Mus musculus (Mouse), this protein is Translationally-controlled tumor protein (Tpt1).